The sequence spans 172 residues: Large ribosomal subunit protein uL16 (172 aa).

Belongs to the universal ribosomal protein uL16 family.

This chain is Large ribosomal subunit protein uL16, found in Methanocella arvoryzae (strain DSM 22066 / NBRC 105507 / MRE50).